The following is a 732-amino-acid chain: MAETKVIYHLDEEETPYLVKVPVPANEIRLRDFKAALGRGHAKYFFKAMDQDFGVVKEEISDDNAKLPCFNGRVVSWLVSSETSQTDSAPPAAEVRPDPPPVPPPVPPPPAERTSGIGDSRPPSFHPNVSGSTEQLDQDNESVISMRRDRVRRRDSTEQGVARGVNGRAERHLSGYESSSTLLTSEIETSICDSEEDDAMSRFSSSTEQSSASRLLKRHRRRRKQRPPRLERTSSFSSVTDSTMSLNIITVTLNMEKYNFLGISIVGQSNERGDGGIYIGSIMKGGAVAADGRIEPGDMLLQVNDINFENMSNDDAVRVLRDIVHKPGPIILTVAKCWDPSPQGYFTLPRNEPIQPIDPAAWVSHSAALSGSFPVYPGSASMSSMTSSTSVTETELSHALPPVSLFSLSVHTDLASVAKVMASPESGLEVRDRMWLKITIPNAFLGSDMVDWLYHHVEGFQDRREARKFASNLLKAGLIRHTVNKITFSEQCYYIFGDLTGCENYMANLSLNDNDGSSGASDQDTLAPLPLPGASPWPLLPTFSYQYPAPHPYSTQPPAYHELSSYSYGMGSAGSQHSEGSRSSGSNRSDGGRGTQKDERSGVVGVGGGESKSGSGSESEYSTRSSIRRIGGGEAGPPSERSTSSRPPLHHPPSVHSYAAPGVPLSYNPMMLMMMPPPPLPPPGACPPSSSVPPGAPPLVRDLASVPPELTASRQSFHMAMGNPSEFFVDVM.

The region spanning 1–82 (MAETKVIYHL…RVVSWLVSSE (82 aa)) is the DIX domain. Disordered regions lie at residues 81–181 (SETS…SSST) and 195–237 (EEDD…SSFS). The span at 98–111 (DPPPVPPPVPPPPA) shows a compositional bias: pro residues. Basic and acidic residues predominate over residues 146–157 (MRRDRVRRRDST). Residues 202-213 (RFSSSTEQSSAS) show a composition bias toward polar residues. The span at 215 to 227 (LLKRHRRRRKQRP) shows a compositional bias: basic residues. The PDZ domain occupies 250 to 335 (TVTLNMEKYN…KPGPIILTVA (86 aa)). In terms of domain architecture, DEP spans 424–498 (PESGLEVRDR…SEQCYYIFGD (75 aa)). Composition is skewed to low complexity over residues 570-589 (MGSA…SNRS), 612-629 (KSGS…SIRR), and 637-647 (PPSERSTSSRP). A disordered region spans residues 570–660 (MGSAGSQHSE…HPPSVHSYAA (91 aa)).

The protein belongs to the DSH family. As to quaternary structure, can form homomultimers. Interacts with prickle1. Interacts (via the PDZ domain) with ccdc88c/dal and dact1-B/dpr. Interacts (via the DIX domain) with ARP/Axin-related protein and dact1-A/frodo. Interacts with sdc4, possibly via fz7. Interacts directly (via the DEP domain) with efnb1/ephrin-B1. May interact indirectly with the phosphorylated ephrin receptors ephb1 and ephb2 via SH domain-containing adapters. Post-translationally, phosphorylated. Phosphorylation is controlled by frizzled proteins, correlates with the onset of embryo dorsalizing events and is higher in the dorsal half of early cleavage embryos. Phosphorylated on tyrosine residues in response to association with efnb1/ephrin-B1.

It is found in the cytoplasm. The protein localises to the cytoplasmic vesicle. It localises to the cell projection. The protein resides in the cilium. Its subcellular location is the nucleus. It is found in the cell membrane. Its function is as follows. Involved in at least 2 independent signaling cascades, controlling cell fate via canonical Wnt signaling and cell polarity via a planar cell polarity (PCP) cascade. Acts synergistically with dal/dapple-like to activate Wnt signaling, stabilizing ctnnb1/beta-catenin and leading to dorsal axis formation. Also prevents degradation of ctnnb1/beta-catenin by displacing gsk3 from a complex with ARP/Axin-related protein. Has an additional role in anterior-posterior (A/P) axis formation, specifying different neuroectodermal cell fates along the A/P axis in a dose-dependent manner by activating several early patterning genes. In the PCP pathway, required at the cell membrane for PCP-mediated neural and mesodermal convergent extension during gastrulation and subsequent neural tube closure, acting to activate jnk. Also involved in blastopore closure and archenteron elongation during early, but not late, gastrulation. Associates with ephrin receptors and ligands and acts as part of a downstream PCP pathway to mediate ephrin-mediated cell repulsion via activation of rhoa. Required for efnb1/ephrin-B1-driven movement of non-retinal progenitor cells into the retina during eye field formation. Patterns the hindbrain. Required for ciliogenesis. Controls the docking of basal bodies to the apical plasma membrane; mediates the activation, but not localization of rhoa at the apical surface of ciliated cells during basal body docking. Furthermore, required for the association of basal bodies with membrane-bound vesicles and the vesicle-trafficking protein exoc4/sec8, and this association is in turn required for basal body docking. Once basal bodies are docked, required for the planar polarization of basal bodies that underlies ciliary beating and the directional fluid flow across ciliated epithelia. The protein is Segment polarity protein dishevelled homolog DVL-2 of Xenopus tropicalis (Western clawed frog).